The primary structure comprises 87 residues: MSVKIRLARFGAKKRPFYRVVVADSRVARDGKFIESLGFYNPMLPKEHELFVKVKVDRLKYWLSVGAQATDRISWFIKKGIINIETA.

This sequence belongs to the bacterial ribosomal protein bS16 family.

The polypeptide is Small ribosomal subunit protein bS16 (Ehrlichia chaffeensis (strain ATCC CRL-10679 / Arkansas)).